Here is a 726-residue protein sequence, read N- to C-terminus: Catalase-peroxidase (726 aa).

The segment at residues 96-224 is a cross-link (tryptophyl-tyrosyl-methioninium (Trp-Tyr) (with M-250)); the sequence is WHSAGTYRIA…LAAVMMGLIY (129 aa). The active-site Proton acceptor is His97. The segment at residues 224–250 is a cross-link (tryptophyl-tyrosyl-methioninium (Tyr-Met) (with W-96)); it reads YVNPEGVDGKPDPLKTAHDMRVTFARM. His265 serves as a coordination point for heme b.

This sequence belongs to the peroxidase family. Peroxidase/catalase subfamily. Homodimer or homotetramer. Requires heme b as cofactor. Formation of the three residue Trp-Tyr-Met cross-link is important for the catalase, but not the peroxidase activity of the enzyme.

The enzyme catalyses H2O2 + AH2 = A + 2 H2O. It catalyses the reaction 2 H2O2 = O2 + 2 H2O. In terms of biological role, bifunctional enzyme with both catalase and broad-spectrum peroxidase activity. In Vibrio campbellii (strain ATCC BAA-1116), this protein is Catalase-peroxidase.